A 266-amino-acid polypeptide reads, in one-letter code: 22 kDa alpha-zein 8 (266 aa).

A signal peptide spans 1-21 (MATKILALLALLALFVSATNA).

This sequence belongs to the zein family.

In terms of biological role, zeins are major seed storage proteins. In Zea mays (Maize), this protein is 22 kDa alpha-zein 8.